The primary structure comprises 509 residues: Ceramide glucosyltransferase (509 aa).

Residues 1–42 (MIMQLGLTSLAFLALKCDAYNIAPKIDTPNVEPFAPSGGLKL) are Lumenal-facing. A helical membrane pass occupies residues 43–63 (LAIVAIIWYVVVLLVAYYGFF). Topologically, residues 64-384 (EIMQKFSKRK…EATLLEPTTE (321 aa)) are cytoplasmic. A short sequence motif (D1) is located at residue D123. Residue D179 is a short sequence motif, D2. Residue D321 is a short sequence motif, D3. D321 acts as the Proton acceptor in catalysis. A (Q/R)XXRW motif is present at residues 361 to 365 (RRIRW). Residues 385–405 (CLLCGTFGTFAISTLFLQSYF) form a helical membrane-spanning segment. At 406–408 (NWK) the chain is on the lumenal side. The helical transmembrane segment at 409–429 (FFIFHLLVWMVTDYTQFHILL) threads the bilayer. Residues 430–466 (TNASQDTATCNVPYFAEPNFNAYGSPFESSNLRTFHR) are Cytoplasmic-facing. Residues 467 to 487 (WVLYWLLREVLALPIWISAML) traverse the membrane as a helical segment. At 488 to 509 (GTRIIWRNRPFRINVDLSAEEL) the chain is on the lumenal side.

It belongs to the glycosyltransferase 2 family.

The protein resides in the golgi apparatus membrane. The enzyme catalyses an N-acylsphing-4-enine + UDP-alpha-D-glucose = a beta-D-glucosyl-(1&lt;-&gt;1')-N-acylsphing-4-enine + UDP + H(+). It participates in lipid metabolism; sphingolipid metabolism. Catalyzes the final step in the biosynthesis of the membrane lipid glucosylceramide (GluCer), the transfer of glucose to ceramide. Glucosylceramides play important roles in growth, differentiation and pathogenicity. The chain is Ceramide glucosyltransferase from Komagataella phaffii (strain GS115 / ATCC 20864) (Yeast).